A 324-amino-acid polypeptide reads, in one-letter code: Putative glycosyltransferase R655 (324 aa).

Belongs to the glycosyltransferase 25 family.

The polypeptide is Putative glycosyltransferase R655 (Acanthamoeba polyphaga (Amoeba)).